We begin with the raw amino-acid sequence, 144 residues long: Mating factor alpha (144 aa).

Positions 1 to 19 (MRFPSIFTAVLFAASSALA) form a signal peptide, or 20.

The active factor is excreted into the culture medium by haploid cells of the alpha mating type and acts on cells of the opposite mating type (type A). It mediates the conjugation process between the two types by inhibiting the initiation of DNA synthesis in type a cells and synchronizing them with type alpha. The chain is Mating factor alpha from Saccharomyces uvarum (Yeast).